The chain runs to 375 residues: MIQPQSVGAVVPQRAHFAEPLPLRSGDALPEYELLYETYGELNAARSNAVLVCHALSGSHHVAGHYADDPGNIGWWDNLVGPGKPLDTRKFFVIGVNNLGGCHGTTGPASINPASGKPWGADFPFVTVEDWVAAQARLADRLGIERFAAVVGGSLGGMQALSWTLQYPERIGHAVLVASAPRLTAQNIAFNEVARQAILSDPDFHGGHYYEHGVVPARGLKLARMLGHITYLSDDAMADKFGRTLRHGKAVYSYDVEFEIESYLRYQGDKFAGFFDANTYLLTTKALDYFDPAFEHGGILRAALARASADFLVVSFSTDWRFSPARSREIVYSLLHNRRNVSYAEIESDAGHDSFLLDDAHYHELLAAYFDRIEV.

In terms of domain architecture, AB hydrolase-1 spans 48–358 (NAVLVCHALS…DAGHDSFLLD (311 aa)). The Nucleophile role is filled by serine 154. Arginine 224 contacts substrate. Residues aspartate 319 and histidine 352 contribute to the active site. Substrate is bound at residue aspartate 353.

Belongs to the AB hydrolase superfamily. MetX family. In terms of assembly, homodimer.

The protein localises to the cytoplasm. The enzyme catalyses L-homoserine + succinyl-CoA = O-succinyl-L-homoserine + CoA. It functions in the pathway amino-acid biosynthesis; L-methionine biosynthesis via de novo pathway; O-succinyl-L-homoserine from L-homoserine: step 1/1. Functionally, transfers a succinyl group from succinyl-CoA to L-homoserine, forming succinyl-L-homoserine. In Aromatoleum aromaticum (strain DSM 19018 / LMG 30748 / EbN1) (Azoarcus sp. (strain EbN1)), this protein is Homoserine O-succinyltransferase.